We begin with the raw amino-acid sequence, 787 residues long: Transcriptional corepressor LEUNIG_HOMOLOG (787 aa).

Residues 1 to 88 (MAQSNWEADK…IEAQQGKAKE (88 aa)) are required for SEU-binding. The 33-residue stretch at 8-40 (ADKMLDVYIYDYLVKKKLHNTAKSFMTEGKVSP) folds into the LisH domain. The stretch at 77–106 (AYIEAQQGKAKEQQMQIQQLQMMRQAQMQR) forms a coiled coil. A disordered region spans residues 299–413 (NMTNSPMYGG…TPSTHTPVDG (115 aa)). 2 stretches are compositionally biased toward low complexity: residues 336–346 (SIGSPMQSSSS) and 355–372 (QQSSSQQQDHLLSQQSQQ). Residues 380 to 409 (PSSSGPANSTGTGNTVGPSNSQPSTPSTHT) are compositionally biased toward polar residues. 7 WD repeats span residues 508-547 (KSASKVICCSFSYDGKLLASAGHDKKVFIWNMETLQVEST), 550-589 (EHAHIITDVRFRPNSTQLATSSFDKTIKIWDASDPGYFLR), 593-633 (GHAA…VRAV), 635-671 (GASTQVRFQPRTGQFLAAASENTVSIFDIENNNKRVN), 675-715 (GHSS…HELS), 717-755 (SGNKFHSVVFHPSYPDLLVIGGYQAIELWNTMENKCMTV), and 757-787 (GHECVISALAQSPSTGVVASASHDKSVKIWK).

Forms corepressor complexes with SLK1 and SLK2; LUH is the transcription repressor subunit and SLK1 and SLK2 the specific DNA-binding adapters. Interacts with SEU. Binds to YAB3, YAB5 and YAB1/FIL; these complexes promote adaxial cell identity in leaves as well as embryonic shoot apical meristem (SAM) initiation and postembryonic SAM maintenance. Expressed in roots, stems, leaves, seedlings, apex, flowers, siliques, flower organs and seeds (including seed coat).

It is found in the nucleus. Transcription repressor subunit of the SEU-SLK1 and SEU-SLK2 transcriptional corepressor of abiotic stress (e.g. salt and osmotic stress) response genes, by means of an epigenetic process involving histone modification (e.g. H3K9 and H3K14 acetylation), probably by recruiting HDAC, to facilitate the condensation of chromatin thus preventing transcription at the target genes. Can also act as a transcription activator. Implicated in embryo and floral development. Involved in post-synthesis cell wall modifications necessary for mucilage extrusion from seeds upon imbibition, probably by promoting the expression of genes required for mucilage maturation (e.g. MUM2). Regulates the maintenance on leaf polarity and meristem activity as well as the initiation of embryonic shoot apical meristem (SAM) development. This Arabidopsis thaliana (Mouse-ear cress) protein is Transcriptional corepressor LEUNIG_HOMOLOG.